The chain runs to 343 residues: Zinc finger CCCH domain-containing protein 39 (343 aa).

Positions 114 to 147 (LSHLADAADEAAALRQENAELRVANNDLACRIAK) form a coiled coil. 2 consecutive C3H1-type zinc fingers follow at residues 268–296 (MFKTELCNKWEETGACPYGDQCQFAHGVA) and 306–334 (RYKTQVCRMVLAGGVCPYGHRCHFRHSIT).

The sequence is that of Zinc finger CCCH domain-containing protein 39 from Oryza sativa subsp. japonica (Rice).